We begin with the raw amino-acid sequence, 734 residues long: Methylcrotonoyl-CoA carboxylase subunit alpha, mitochondrial (734 aa).

A mitochondrion-targeting transit peptide spans 1–25; sequence MSMMTVWALRRNVRRKNHSMLVRYI. Positions 37 to 484 constitute a Biotin carboxylation domain; that stretch reads CIEKILVANR…ETHFIEHHKS (448 aa). The ATP site is built by lysine 152, glutamate 236, and histidine 271. Residues 156–354 enclose the ATP-grasp domain; the sequence is KRIMGAAGVP…LVEWQIRVAN (199 aa). Mn(2+) is bound by residues glutamate 311, glutamate 325, and asparagine 327. The active site involves arginine 329. Residue serine 645 is modified to Phosphoserine. The tract at residues 645–666 is disordered; it reads SEDEEGVQHRTSSETSSHPPGT. A Biotinyl-binding domain is found at 657-733; sequence SETSSHPPGT…SDGSALFRIK (77 aa). Lysine 699 is modified (N6-biotinyllysine).

Probably a heterodimer composed of biotin-containing alpha subunits and beta subunits. Requires biotin as cofactor. Mn(2+) serves as cofactor. As to expression, in roots, cotyledons, leaves, flowers, ovaries, siliques and embryos.

The protein localises to the mitochondrion matrix. It catalyses the reaction 3-methylbut-2-enoyl-CoA + hydrogencarbonate + ATP = 3-methyl-(2E)-glutaconyl-CoA + ADP + phosphate + H(+). The protein operates within amino-acid degradation; L-leucine degradation; (S)-3-hydroxy-3-methylglutaryl-CoA from 3-isovaleryl-CoA: step 2/3. Biotin-attachment subunit of the 3-methylcrotonyl-CoA carboxylase, an enzyme that catalyzes the conversion of 3-methylcrotonyl-CoA to 3-methylglutaconyl-CoA, a critical step for leucine and isovaleric acid catabolism. This chain is Methylcrotonoyl-CoA carboxylase subunit alpha, mitochondrial (MCCA), found in Arabidopsis thaliana (Mouse-ear cress).